The sequence spans 160 residues: Ribosomal RNA large subunit methyltransferase H (160 aa).

S-adenosyl-L-methionine is bound by residues Leu-77, Gly-109, and 128–133 (LSNLTF).

It belongs to the RNA methyltransferase RlmH family. As to quaternary structure, homodimer.

The protein localises to the cytoplasm. It carries out the reaction pseudouridine(1915) in 23S rRNA + S-adenosyl-L-methionine = N(3)-methylpseudouridine(1915) in 23S rRNA + S-adenosyl-L-homocysteine + H(+). Functionally, specifically methylates the pseudouridine at position 1915 (m3Psi1915) in 23S rRNA. The chain is Ribosomal RNA large subunit methyltransferase H from Desulforamulus reducens (strain ATCC BAA-1160 / DSM 100696 / MI-1) (Desulfotomaculum reducens).